Reading from the N-terminus, the 227-residue chain is Uridylate kinase (227 aa).

Lys-7 to Lys-11 is an ATP binding site. A UMP-binding site is contributed by Gly-44. Gly-45 and Arg-49 together coordinate ATP. UMP is bound by residues Asp-66 and Phe-114–Thr-120. ATP contacts are provided by Thr-140, Asn-141, Tyr-146, and Asp-149.

This sequence belongs to the UMP kinase family. In terms of assembly, homohexamer.

The protein localises to the cytoplasm. It catalyses the reaction UMP + ATP = UDP + ADP. Its pathway is pyrimidine metabolism; CTP biosynthesis via de novo pathway; UDP from UMP (UMPK route): step 1/1. Its activity is regulated as follows. Unlike most bacteria, is not activated by GTP. UTP acts as a competitive inhibitor against both substrates. High concentration of UMP abolishes the inhibition of UTP at low ATP concentrations, indicating that UTP binds to the acceptor site (UMP site). Functionally, catalyzes the reversible phosphorylation of UMP to UDP, with ATP as the most efficient phosphate donor. Is also able to phosphorylate dUMP, although much less efficiently. This is Uridylate kinase (pyrH) from Saccharolobus solfataricus (strain ATCC 35092 / DSM 1617 / JCM 11322 / P2) (Sulfolobus solfataricus).